Here is a 122-residue protein sequence, read N- to C-terminus: Large ribosomal subunit protein uL14 (122 aa).

It belongs to the universal ribosomal protein uL14 family. As to quaternary structure, part of the 50S ribosomal subunit. Forms a cluster with proteins L3 and L19. In the 70S ribosome, L14 and L19 interact and together make contacts with the 16S rRNA in bridges B5 and B8.

Functionally, binds to 23S rRNA. Forms part of two intersubunit bridges in the 70S ribosome. This is Large ribosomal subunit protein uL14 from Acidovorax sp. (strain JS42).